We begin with the raw amino-acid sequence, 249 residues long: MFTVIIPARFASTRLPGKPLADIHGKPMIVRVMERAKRSGAGRVIVATDNHDVVDAVVAAGGEACLTNENHHSGTERLAEVINKYQFSDDEIIVNVQGDEPLIPEEIIKQVAENLAGCKAGMATLAVQIHDAEEAFNPNAVKVVMDKQGYALYFSRATIPWERGRFIQSRETIGDNFLRHIGIYAYRAGFIRRYVQWEPSPLEQIEMLEQLRVLWYGEKIHVGIALKAPGVGVDTPEDLAAIRKVFTEI.

It belongs to the KdsB family.

Its subcellular location is the cytoplasm. It catalyses the reaction 3-deoxy-alpha-D-manno-oct-2-ulosonate + CTP = CMP-3-deoxy-beta-D-manno-octulosonate + diphosphate. It participates in nucleotide-sugar biosynthesis; CMP-3-deoxy-D-manno-octulosonate biosynthesis; CMP-3-deoxy-D-manno-octulosonate from 3-deoxy-D-manno-octulosonate and CTP: step 1/1. The protein operates within bacterial outer membrane biogenesis; lipopolysaccharide biosynthesis. Its function is as follows. Activates KDO (a required 8-carbon sugar) for incorporation into bacterial lipopolysaccharide in Gram-negative bacteria. This chain is 3-deoxy-manno-octulosonate cytidylyltransferase, found in Photorhabdus laumondii subsp. laumondii (strain DSM 15139 / CIP 105565 / TT01) (Photorhabdus luminescens subsp. laumondii).